A 465-amino-acid polypeptide reads, in one-letter code: MSFLVAIVGRANVGKSTLFNVLTNSHDALVFDFEGVTRDRQYGQAKYDDLDYLVVDTGGISDKDVGFDEFMAKQSQIAIDEANLVFFVVDGRSGLTTGDEYVASLLRQKDKKVVVVVNKVDGTDEEAAMAEFYSFGFDKVFAISAAHRRNTQKLVDKFLKKPLNEYYQDYTQTQEHKEQQRHGIHFSLIGRPNVGKSTLTNRMLGEDRVVVFDMPGTTIDSVSIPFERHGQKYTIVDTAGVRKRGKVKQTLEKFSVIKTLQAIQDSNVVVAVVDARQGISDQDLSLIHFAIKNGRALVLAVNKWDGMTEEDRIQVKQDLKRKLFFLQDYVDIHFISALHGTNVGHVFESIDTAYACANKKITTADATRLMQLAVEAHSPPMVGKFRIKLKYAHVGGHNPPVIVIHGNQVSRLPNSYKRYLENFFREALDFRGTPIVFEFKQSENPFADRKNKRSKDEGSKSKKVK.

2 consecutive EngA-type G domains span residues 3–166 and 184–358; these read FLVA…LNEY and IHFS…ACAN. GTP is bound by residues 9–16, 56–60, 118–121, 190–197, 237–241, and 302–305; these read GRANVGKS, DTGGI, NKVD, GRPNVGKS, DTAGV, and NKWD. One can recognise a KH-like domain in the interval 359–443; the sequence is KKITTADATR…PIVFEFKQSE (85 aa). A disordered region spans residues 446 to 465; the sequence is FADRKNKRSKDEGSKSKKVK.

It belongs to the TRAFAC class TrmE-Era-EngA-EngB-Septin-like GTPase superfamily. EngA (Der) GTPase family. As to quaternary structure, associates with the 50S ribosomal subunit.

In terms of biological role, GTPase that plays an essential role in the late steps of ribosome biogenesis. The chain is GTPase Der from Francisella tularensis subsp. tularensis (strain WY96-3418).